Consider the following 197-residue polypeptide: Protein-S-isoprenylcysteine O-methyltransferase B (197 aa).

The next 3 membrane-spanning stretches (helical) occupy residues 16-36, 52-72, and 81-101; these read MFLAIIFFHTSEYILAIAIHG, ALAMLISVLEYIAEIVFFPGL, and FGLTMIILGEILRKTAIITAG. Residues 116 to 119, Tyr124, and 129 to 132 contribute to the S-adenosyl-L-methionine site; these read HKLV and HPSY. Residues 140-160 traverse the membrane as a helical segment; sequence VGTQVMLCNPISAIAFAVVVW. Arg166 provides a ligand contact to substrate. Glu170 is an S-adenosyl-L-methionine binding site.

Belongs to the class VI-like SAM-binding methyltransferase superfamily. Isoprenylcysteine carboxyl methyltransferase family. It depends on Zn(2+) as a cofactor. As to expression, expressed in flowers, stems, leaves, roots and siliques. Detected in apices and vascular tissues of leaves and roots, in the stigma and in the filaments and anthers of stamen. Not found in petioles or hypocotyls.

It is found in the endoplasmic reticulum membrane. The catalysed reaction is [protein]-C-terminal S-[(2E,6E)-farnesyl]-L-cysteine + S-adenosyl-L-methionine = [protein]-C-terminal S-[(2E,6E)-farnesyl]-L-cysteine methyl ester + S-adenosyl-L-homocysteine. Its activity is regulated as follows. Inhibited by farnesylthioacetic acid (FTAA) and N-acetyl-S-trans, trans-farnesyl-l-cysteine (AFC). Catalyzes the post-translational methylation of isoprenylated C-terminal cysteine residues, resulting in the modulation of the function of prenylated proteins. Involved in negative regulation of abscisic acid signaling. Carboxyl methylation is a reversible and potentially regulated step in the post-translational modification of prenylated proteins. This is Protein-S-isoprenylcysteine O-methyltransferase B from Arabidopsis thaliana (Mouse-ear cress).